Consider the following 99-residue polypeptide: NADH-quinone oxidoreductase subunit K (99 aa).

The next 3 helical transmembrane spans lie at 3-23, 28-48, and 59-79; these read PDNY…GVLL, IVMF…FVTF, and VVAF…LAII.

The protein belongs to the complex I subunit 4L family. As to quaternary structure, NDH-1 is composed of 14 different subunits. Subunits NuoA, H, J, K, L, M, N constitute the membrane sector of the complex.

Its subcellular location is the cell membrane. It catalyses the reaction a quinone + NADH + 5 H(+)(in) = a quinol + NAD(+) + 4 H(+)(out). In terms of biological role, NDH-1 shuttles electrons from NADH, via FMN and iron-sulfur (Fe-S) centers, to quinones in the respiratory chain. The immediate electron acceptor for the enzyme in this species is believed to be a menaquinone. Couples the redox reaction to proton translocation (for every two electrons transferred, four hydrogen ions are translocated across the cytoplasmic membrane), and thus conserves the redox energy in a proton gradient. This chain is NADH-quinone oxidoreductase subunit K, found in Mycolicibacterium vanbaalenii (strain DSM 7251 / JCM 13017 / BCRC 16820 / KCTC 9966 / NRRL B-24157 / PYR-1) (Mycobacterium vanbaalenii).